Consider the following 160-residue polypeptide: Large ribosomal subunit protein uL18 (160 aa).

This sequence belongs to the universal ribosomal protein uL18 family. In terms of assembly, part of the 50S ribosomal subunit. Contacts the 5S and 23S rRNAs.

In terms of biological role, this is one of the proteins that bind and probably mediate the attachment of the 5S RNA into the large ribosomal subunit, where it forms part of the central protuberance. This is Large ribosomal subunit protein uL18 from Thermoplasma volcanium (strain ATCC 51530 / DSM 4299 / JCM 9571 / NBRC 15438 / GSS1).